The primary structure comprises 287 residues: uncharacterized protein (287 aa).

It belongs to the A.longa ORF167/ORF288 family.

It is found in the plastid. This is an uncharacterized protein from Euglena longa (Euglenophycean alga).